A 750-amino-acid polypeptide reads, in one-letter code: Photosystem I P700 chlorophyll a apoprotein A1 (750 aa).

A run of 8 helical transmembrane segments spans residues 70–93, 156–179, 195–219, 291–309, 346–369, 385–411, 433–455, and 531–549; these read VFSA…FHGA, LYCT…FHYH, LNHH…HVSL, IAHH…GHMY, WHAQ…HHMY, LSLF…IFMV, AIIS…LYIH, and FLVH…LILL. Residues Cys573 and Cys582 each coordinate [4Fe-4S] cluster. The next 2 membrane-spanning stretches (helical) occupy residues 589–610 and 664–686; these read HVFL…HFSW and LSAY…MFLF. Chlorophyll a' is bound at residue His675. Chlorophyll a-binding residues include Met683 and Tyr691. Trp692 provides a ligand contact to phylloquinone. A helical transmembrane segment spans residues 724 to 744; the sequence is AVGVTHYLLGGIATTWAFFLA.

It belongs to the PsaA/PsaB family. As to quaternary structure, the PsaA/B heterodimer binds the P700 chlorophyll special pair and subsequent electron acceptors. PSI consists of a core antenna complex that captures photons, and an electron transfer chain that converts photonic excitation into a charge separation. The eukaryotic PSI reaction center is composed of at least 11 subunits. P700 is a chlorophyll a/chlorophyll a' dimer, A0 is one or more chlorophyll a, A1 is one or both phylloquinones and FX is a shared 4Fe-4S iron-sulfur center. is required as a cofactor.

It is found in the plastid. It localises to the chloroplast thylakoid membrane. The enzyme catalyses reduced [plastocyanin] + hnu + oxidized [2Fe-2S]-[ferredoxin] = oxidized [plastocyanin] + reduced [2Fe-2S]-[ferredoxin]. Its function is as follows. PsaA and PsaB bind P700, the primary electron donor of photosystem I (PSI), as well as the electron acceptors A0, A1 and FX. PSI is a plastocyanin-ferredoxin oxidoreductase, converting photonic excitation into a charge separation, which transfers an electron from the donor P700 chlorophyll pair to the spectroscopically characterized acceptors A0, A1, FX, FA and FB in turn. Oxidized P700 is reduced on the lumenal side of the thylakoid membrane by plastocyanin. The protein is Photosystem I P700 chlorophyll a apoprotein A1 of Panax ginseng (Korean ginseng).